The following is a 492-amino-acid chain: Sestrin-1 (492 aa).

Residues 71–252 are N-terminal domain; may mediate the alkylhydroperoxide reductase activity; it reads FADSFAALGR…ICDITNGNHS (182 aa). Cys130 serves as the catalytic Cysteine sulfenic acid (-SOH) intermediate. Ser293 and Ser314 each carry phosphoserine. The segment at 321-492 is C-terminal domain; mediates TORC1 regulation; it reads PARDVSRHFE…ALRAITRYMT (172 aa). L-leucine-binding positions include 386-389, Thr398, and Glu463; that span reads TYNT.

This sequence belongs to the sestrin family. In terms of assembly, interacts with the GATOR2 complex which is composed of MIOS, SEC13, SEH1L, WDR24 and WDR59; the interaction is negatively regulated by leucine. Interacts with RRAGA, RRAGB, RRAGC and RRAGD; may function as a guanine nucleotide dissociation inhibitor for RRAGs and regulate them. Interacts with KEAP1, RBX1 and SQSTM1; in the SQSTM1-dependent autophagic degradation of KEAP1. May interact with PRDX1.

It localises to the nucleus. The protein localises to the cytoplasm. It carries out the reaction a hydroperoxide + L-cysteinyl-[protein] = S-hydroxy-L-cysteinyl-[protein] + an alcohol. In terms of biological role, functions as an intracellular leucine sensor that negatively regulates the TORC1 signaling pathway through the GATOR complex. In absence of leucine, binds the GATOR subcomplex GATOR2 and prevents TORC1 signaling. Binding of leucine to SESN2 disrupts its interaction with GATOR2 thereby activating the TORC1 signaling pathway. This stress-inducible metabolic regulator may also play a role in protection against oxidative and genotoxic stresses. May positively regulate the transcription by NFE2L2 of genes involved in the response to oxidative stress by facilitating the SQSTM1-mediated autophagic degradation of KEAP1. Moreover, may prevent the accumulation of reactive oxygen species (ROS) through the alkylhydroperoxide reductase activity born by the N-terminal domain of the protein. Was originally reported to contribute to oxidative stress resistance by reducing PRDX1. However, this could not be confirmed. The chain is Sestrin-1 from Macaca fascicularis (Crab-eating macaque).